The primary structure comprises 135 residues: MIDVRCICAIGQRGQLGLNGHLPWEGNTDPLFVEDVTRFFALTMGHVLIAGPKTVASVPEFAFKDRTIDVIRSHEDPEAVLKRYPGRRIFVGGGIAVWNVYAKYIQHWDVTRLPYDGEADRWFDPAWLVGGPLRS.

NADP(+)-binding positions include alanine 9, 16–21, 52–54, and 93–97; these read LGLNGH, PKT, and GGIAV.

Homodimer.

The catalysed reaction is 5,6,7,8-tetrahydromethanopterin + NAD(+) = 7,8-dihydromethanopterin + NADH + H(+). It catalyses the reaction 5,6,7,8-tetrahydromethanopterin + NADP(+) = 7,8-dihydromethanopterin + NADPH + H(+). Its pathway is cofactor biosynthesis; 5,6,7,8-tetrahydromethanopterin biosynthesis. Catalyzes the reduction of dihydromethanopterin (H(2)MPT) to tetrahydromethanopterin (H(4)MPT). Shows preference for NADPH rather than NADH as electron donor. Does not reduce dihydrofolate. This is Dihydromethanopterin reductase (dmrA) from Methylorubrum extorquens (strain ATCC 14718 / DSM 1338 / JCM 2805 / NCIMB 9133 / AM1) (Methylobacterium extorquens).